The following is a 161-amino-acid chain: SsrA-binding protein (161 aa).

A disordered region spans residues 1–23 (MATKKNEQIKGRTDGLVAENRRS).

The protein belongs to the SmpB family.

It localises to the cytoplasm. Required for rescue of stalled ribosomes mediated by trans-translation. Binds to transfer-messenger RNA (tmRNA), required for stable association of tmRNA with ribosomes. tmRNA and SmpB together mimic tRNA shape, replacing the anticodon stem-loop with SmpB. tmRNA is encoded by the ssrA gene; the 2 termini fold to resemble tRNA(Ala) and it encodes a 'tag peptide', a short internal open reading frame. During trans-translation Ala-aminoacylated tmRNA acts like a tRNA, entering the A-site of stalled ribosomes, displacing the stalled mRNA. The ribosome then switches to translate the ORF on the tmRNA; the nascent peptide is terminated with the 'tag peptide' encoded by the tmRNA and targeted for degradation. The ribosome is freed to recommence translation, which seems to be the essential function of trans-translation. This is SsrA-binding protein from Hyphomonas neptunium (strain ATCC 15444).